Consider the following 389-residue polypeptide: Glutamate 5-kinase (389 aa).

Position 16 (Lys-16) interacts with ATP. Substrate is bound by residues Ser-56, Asp-143, and Asn-155. ATP is bound at residue 175–176; that stretch reads SD. A PUA domain is found at 281–358; the sequence is AGELHVDEGA…AEIEAILGYA (78 aa).

This sequence belongs to the glutamate 5-kinase family.

It is found in the cytoplasm. It catalyses the reaction L-glutamate + ATP = L-glutamyl 5-phosphate + ADP. The protein operates within amino-acid biosynthesis; L-proline biosynthesis; L-glutamate 5-semialdehyde from L-glutamate: step 1/2. Functionally, catalyzes the transfer of a phosphate group to glutamate to form L-glutamate 5-phosphate. The sequence is that of Glutamate 5-kinase from Rhizobium rhizogenes (strain K84 / ATCC BAA-868) (Agrobacterium radiobacter).